We begin with the raw amino-acid sequence, 395 residues long: Elongation factor Tu (395 aa).

The 195-residue stretch at 10–204 folds into the tr-type G domain; that stretch reads KPHVNIGTIG…AVDEYIPTPQ (195 aa). The G1 stretch occupies residues 19–26; sequence GHVDHGKT. 19–26 serves as a coordination point for GTP; the sequence is GHVDHGKT. Thr-26 serves as a coordination point for Mg(2+). A G2 region spans residues 60-64; sequence GITIS. The interval 81–84 is G3; that stretch reads DCPG. Residues 81-85 and 136-139 contribute to the GTP site; these read DCPGH and NKCD. Residues 136–139 form a G4 region; sequence NKCD. A G5 region spans residues 174–176; it reads SAL.

Belongs to the TRAFAC class translation factor GTPase superfamily. Classic translation factor GTPase family. EF-Tu/EF-1A subfamily. In terms of assembly, monomer.

The protein resides in the cytoplasm. The catalysed reaction is GTP + H2O = GDP + phosphate + H(+). In terms of biological role, GTP hydrolase that promotes the GTP-dependent binding of aminoacyl-tRNA to the A-site of ribosomes during protein biosynthesis. The protein is Elongation factor Tu of Anoxybacillus flavithermus (strain DSM 21510 / WK1).